Reading from the N-terminus, the 105-residue chain is Antitoxin YafW (105 aa).

It belongs to the CbeA/YafW/YfjZ antitoxin family.

In terms of biological role, antitoxin component of a type IV toxin-antitoxin (TA) system. Antitoxin that counteracts the effect of cognate toxin YkfI. It does not seem to bind to the cognate toxin but instead induces toxin loss by an unknown mechanism. Co-overexpression of toxin YkfI and antitoxin YafW leads to formation of elongated cells. The sequence is that of Antitoxin YafW (yafW) from Escherichia coli (strain K12).